Here is a 175-residue protein sequence, read N- to C-terminus: Putative adenylate cyclase MJ0240 (175 aa).

The region spanning 1-175 (MIEVEIKVKI…RKSYLELRGL (175 aa)) is the CYTH domain. Tyr-37 functions as the Proton acceptor in the catalytic mechanism.

This sequence belongs to the adenylyl cyclase CyaB family.

It localises to the cytoplasm. It catalyses the reaction ATP = 3',5'-cyclic AMP + diphosphate. Could catalyze the biosynthesis of cyclic AMP (cAMP) from ATP. This is Putative adenylate cyclase MJ0240 from Methanocaldococcus jannaschii (strain ATCC 43067 / DSM 2661 / JAL-1 / JCM 10045 / NBRC 100440) (Methanococcus jannaschii).